The primary structure comprises 205 residues: Large ribosomal subunit protein uL4 (205 aa).

Residues 43–97 (GKRQGTSKVKNRSAVRGGGKKPWRQKGTGRARQGSIRAPQWRGGGTVFGPTPRSY) are disordered. The segment covering 51–71 (VKNRSAVRGGGKKPWRQKGTG) has biased composition (basic residues).

Belongs to the universal ribosomal protein uL4 family. As to quaternary structure, part of the 50S ribosomal subunit.

In terms of biological role, one of the primary rRNA binding proteins, this protein initially binds near the 5'-end of the 23S rRNA. It is important during the early stages of 50S assembly. It makes multiple contacts with different domains of the 23S rRNA in the assembled 50S subunit and ribosome. Its function is as follows. Forms part of the polypeptide exit tunnel. This chain is Large ribosomal subunit protein uL4, found in Lactobacillus acidophilus (strain ATCC 700396 / NCK56 / N2 / NCFM).